Consider the following 522-residue polypeptide: Protein nucleotidyltransferase YdiU (522 aa).

Positions 101, 103, 104, 123, 135, 136, 193, and 200 each coordinate ATP. D270 functions as the Proton acceptor in the catalytic mechanism. N271 and D280 together coordinate Mg(2+). D280 serves as a coordination point for ATP.

This sequence belongs to the SELO family. The cofactor is Mg(2+). Requires Mn(2+) as cofactor.

The catalysed reaction is L-seryl-[protein] + ATP = 3-O-(5'-adenylyl)-L-seryl-[protein] + diphosphate. The enzyme catalyses L-threonyl-[protein] + ATP = 3-O-(5'-adenylyl)-L-threonyl-[protein] + diphosphate. It catalyses the reaction L-tyrosyl-[protein] + ATP = O-(5'-adenylyl)-L-tyrosyl-[protein] + diphosphate. It carries out the reaction L-histidyl-[protein] + UTP = N(tele)-(5'-uridylyl)-L-histidyl-[protein] + diphosphate. The catalysed reaction is L-seryl-[protein] + UTP = O-(5'-uridylyl)-L-seryl-[protein] + diphosphate. The enzyme catalyses L-tyrosyl-[protein] + UTP = O-(5'-uridylyl)-L-tyrosyl-[protein] + diphosphate. Its function is as follows. Nucleotidyltransferase involved in the post-translational modification of proteins. It can catalyze the addition of adenosine monophosphate (AMP) or uridine monophosphate (UMP) to a protein, resulting in modifications known as AMPylation and UMPylation. This chain is Protein nucleotidyltransferase YdiU, found in Flavobacterium johnsoniae (strain ATCC 17061 / DSM 2064 / JCM 8514 / BCRC 14874 / CCUG 350202 / NBRC 14942 / NCIMB 11054 / UW101) (Cytophaga johnsonae).